A 379-amino-acid chain; its full sequence is Homoserine O-succinyltransferase (379 aa).

Residues 51 to 360 enclose the AB hydrolase-1 domain; that stretch reads NAVLICHALS…DAPQGHDAFL (310 aa). The active-site Nucleophile is the S157. R227 provides a ligand contact to substrate. Active-site residues include D323 and H356. Substrate is bound at residue D357.

The protein belongs to the AB hydrolase superfamily. MetX family. In terms of assembly, homodimer.

The protein resides in the cytoplasm. It carries out the reaction L-homoserine + succinyl-CoA = O-succinyl-L-homoserine + CoA. It participates in amino-acid biosynthesis; L-methionine biosynthesis via de novo pathway; O-succinyl-L-homoserine from L-homoserine: step 1/1. In terms of biological role, transfers a succinyl group from succinyl-CoA to L-homoserine, forming succinyl-L-homoserine. This is Homoserine O-succinyltransferase from Pseudomonas syringae pv. tomato (strain ATCC BAA-871 / DC3000).